The primary structure comprises 929 residues: DNA mismatch repair protein MutS (929 aa).

The tract at residues 22-46 is disordered; that stretch reads PAAPRSTGSAAAPPPSPAVLDDRSG. Residues 23 to 32 show a composition bias toward low complexity; it reads AAPRSTGSAA. ATP is bound at residue 678–685; sequence GPNMAGKS.

This sequence belongs to the DNA mismatch repair MutS family.

In terms of biological role, this protein is involved in the repair of mismatches in DNA. It is possible that it carries out the mismatch recognition step. This protein has a weak ATPase activity. The sequence is that of DNA mismatch repair protein MutS from Rhodospirillum rubrum (strain ATCC 11170 / ATH 1.1.1 / DSM 467 / LMG 4362 / NCIMB 8255 / S1).